The chain runs to 167 residues: MLKSSNINSVLNELPNDPARDSTAQSSHNGKPKQDAETCCSSQDNEVMASLAALQLSAGVLQIAEPPLNHVRTQLRELIGRQNKTYIDLSKEKYKLDCSEVARLNDMMSDVKRYKDKLTKIKKEMQGVYQRTKELKKRAANVAACKQRDYQRKLERLQHEESLIGSQ.

Residues 1 to 11 (MLKSSNINSVL) show a composition bias toward polar residues. Residues 1–38 (MLKSSNINSVLNELPNDPARDSTAQSSHNGKPKQDAET) form a disordered region. Residues 102–160 (ARLNDMMSDVKRYKDKLTKIKKEMQGVYQRTKELKKRAANVAACKQRDYQRKLERLQHE) are a coiled coil.

It belongs to the BLOC1S6 family. Component of the biogenesis of lysosome-related organelles complex-1 (BLOC-1) composed of Blos1, Blos2, Blos3, Blos4, Dysb, Muted, Pldn and Snapin. Interacts with Blos1, Blos4 and Dysb.

It is found in the synapse. The protein resides in the cytoplasm. It localises to the cytoskeleton. The protein localises to the myofibril. Its subcellular location is the sarcomere. It is found in the z line. Functionally, component of the biogenesis of lysosome-related organelles complex-1 (BLOC-1) involved in pigment granule biogenesis and membrane trafficking in synapses. In response to high synaptic activity at neuromuscular junctions, plays a key role in promoting efficient synaptic vesicle recycling and re-formation through early endosomes. This is Biogenesis of lysosome-related organelles complex 1 subunit 6 from Drosophila melanogaster (Fruit fly).